The chain runs to 193 residues: Dirigent protein 11 (193 aa).

A signal peptide spans 1-33 (MLQITNMATPFLLLLLPLIFSTVLLLTITVTQS). N-linked (GlcNAc...) asparagine glycosylation is found at asparagine 78 and asparagine 136.

The protein belongs to the plant dirigent protein family. Homodimer.

The protein localises to the secreted. It localises to the extracellular space. Its subcellular location is the apoplast. Its function is as follows. Dirigent proteins impart stereoselectivity on the phenoxy radical-coupling reaction, yielding optically active lignans from two molecules of coniferyl alcohol in the biosynthesis of lignans, flavonolignans, and alkaloids and thus plays a central role in plant secondary metabolism. This Arabidopsis thaliana (Mouse-ear cress) protein is Dirigent protein 11 (DIR11).